Reading from the N-terminus, the 610-residue chain is UvrABC system protein C (610 aa).

The 79-residue stretch at 16–94 (SQPGVYRMYD…IKLYQPRYNV (79 aa)) folds into the GIY-YIG domain. Residues 204 to 239 (QQVLTQLITRMEEASQQLHFEDAARIRDQIQAVRRV) enclose the UVR domain.

It belongs to the UvrC family. As to quaternary structure, interacts with UvrB in an incision complex.

It localises to the cytoplasm. In terms of biological role, the UvrABC repair system catalyzes the recognition and processing of DNA lesions. UvrC both incises the 5' and 3' sides of the lesion. The N-terminal half is responsible for the 3' incision and the C-terminal half is responsible for the 5' incision. This Yersinia pseudotuberculosis serotype O:1b (strain IP 31758) protein is UvrABC system protein C.